The primary structure comprises 131 residues: Antiholin (131 aa).

Residues 1-15 (MTMIAWMQHFLETDE) lie on the Periplasmic side of the membrane. Cytoplasmic segments follow at residues 1 to 52 (MTMI…SSFK) and 39 to 50 (FAKLNPNIKFSS). A helical transmembrane segment spans residues 16-38 (TKLIYWLTFLMVCMVVDTVLGVL). The chain crosses the membrane as a helical span at residues 53 to 75 (IKTGVLIKVSEMILALLAVPFAV). Topologically, residues 76-78 (PFP) are periplasmic. Residues 79–101 (AGLPLLYTVYTALCVSEIYSIFG) traverse the membrane as a helical segment. Residues 102-131 (HLRLVDDKSDFLEILENFFKRTSGKNKEDK) lie on the Cytoplasmic side of the membrane.

This sequence belongs to the bacteriophage holin family. phi29likevirus holin subfamily. Homomultimer. Interacts with isoform Antiholin; this interaction blocks the holin homomultimerization and delays host cell lysis.

The protein localises to the host cell inner membrane. Accumulates harmlessly in the cytoplasmic membrane until it reaches a critical concentration that triggers the formation of micron-scale pores (holes) causing host cell membrane disruption and endolysin escape into the periplasmic space. Determines the precise timing of host cell lysis. Participates with the endolysin and spanin proteins in the sequential events which lead to the programmed host cell lysis releasing the mature viral particles from the host cell. In terms of biological role, counteracts the aggregation of the holin molecules and thus of pore formation. The sequence is that of Antiholin (14) from Bacillus subtilis (Bacteriophage PZA).